Here is a 154-residue protein sequence, read N- to C-terminus: Large ribosomal subunit protein uL15 (154 aa).

Residues 1–13 are compositionally biased toward basic and acidic residues; that stretch reads MKLNELRDHEGAT. The interval 1 to 44 is disordered; sequence MKLNELRDHEGATKNRKRIGRGIGSGTGKTGGCGVKGQKSRSGV. A compositionally biased stretch (gly residues) spans 21–35; that stretch reads RGIGSGTGKTGGCGV.

This sequence belongs to the universal ribosomal protein uL15 family. In terms of assembly, part of the 50S ribosomal subunit.

Binds to the 23S rRNA. The sequence is that of Large ribosomal subunit protein uL15 from Bartonella bacilliformis (strain ATCC 35685 / KC583 / Herrer 020/F12,63).